Here is a 174-residue protein sequence, read N- to C-terminus: Caltractin ICL1e (174 aa).

The segment at 1–33 (MSKKQQAPVAQKPVGKQQQVNRKPQDRPGLTED) is disordered. EF-hand domains lie at 33–68 (DEIE…LGFD), 88–103 (IDFD…KLGN), 105–140 (ESRD…LGET), and 141–174 (MTAE…KRTF).

The protein belongs to the centrin family. Monomer.

The protein localises to the cytoplasm. It localises to the cytoskeleton. Functionally, plays a fundamental role in microtubule organizing center structure and function. Component of the infraciliary lattice (ICL) and the ciliary basal bodies. The sequence is that of Caltractin ICL1e (Icl1e) from Paramecium tetraurelia.